Here is a 352-residue protein sequence, read N- to C-terminus: MSSQGKVPVGIVGASGYGGVQLVRLLVDHPHLELAYLGGEGSAGRPYTDLYPHLQGCVDLLVEPVDLEAIAARCAVVFLALPNGLAVDLAPTLLQRGCRVLDLSADYRFSELKTYTLWYGKERQDQAVAATAVYGLPELYRDRIAEAQLIGCPGCYPTASLLALSPLMKQGLIVPETAIIDAKSGTSGGGRQGKINLLLAEAEGSLGAYNVGHHRHTPEIEQICSDLAGHEVMVQFTPHLIPMPRGILATVYATLRDPGLEREDLLTIYRAFYRNSPWVKILPSGTYPQTKWACGTNLCYIGIEVDSRTGRVIVMSAIDNLLKGQSGQAVQCLNLMMGWEETLGLPQLAFYP.

Residue cysteine 155 is part of the active site.

Belongs to the NAGSA dehydrogenase family. Type 1 subfamily.

It localises to the cytoplasm. It catalyses the reaction N-acetyl-L-glutamate 5-semialdehyde + phosphate + NADP(+) = N-acetyl-L-glutamyl 5-phosphate + NADPH + H(+). The protein operates within amino-acid biosynthesis; L-arginine biosynthesis; N(2)-acetyl-L-ornithine from L-glutamate: step 3/4. Catalyzes the NADPH-dependent reduction of N-acetyl-5-glutamyl phosphate to yield N-acetyl-L-glutamate 5-semialdehyde. This chain is N-acetyl-gamma-glutamyl-phosphate reductase, found in Cyanothece sp. (strain PCC 7425 / ATCC 29141).